A 214-amino-acid polypeptide reads, in one-letter code: Zinc finger protein 11 (214 aa).

Residues 1-27 (MKRTHLASFSNRDKTQEEEGEDGNGDN) are disordered. The segment at 49–71 (YTCSFCRREFRSAQALGGHMNVH) adopts a C2H2-type zinc-finger fold. The Nuclear localization signal signature appears at 72–79 (RRDRAKLR). The segment at 89–130 (HHHTPIANPNPNFSSSSSSSTTTAHLEPSLTNQRSKTTPFPS) is disordered. Residues 102–111 (SSSSSSSTTT) show a composition bias toward low complexity. Polar residues predominate over residues 117–128 (SLTNQRSKTTPF).

In terms of tissue distribution, expressed in roots, stems, axillary buds and flowers.

It is found in the nucleus. Its function is as follows. Probable transcription factor that may regulate cell division and growth. The chain is Zinc finger protein 11 from Arabidopsis thaliana (Mouse-ear cress).